We begin with the raw amino-acid sequence, 690 residues long: Glycine--tRNA ligase beta subunit (690 aa).

Belongs to the class-II aminoacyl-tRNA synthetase family. As to quaternary structure, tetramer of two alpha and two beta subunits.

The protein resides in the cytoplasm. The enzyme catalyses tRNA(Gly) + glycine + ATP = glycyl-tRNA(Gly) + AMP + diphosphate. This Tolumonas auensis (strain DSM 9187 / NBRC 110442 / TA 4) protein is Glycine--tRNA ligase beta subunit.